Consider the following 122-residue polypeptide: Small ribosomal subunit protein uS13 (122 aa).

The interval 98–122 (VRGQRTHTNARTRKGPAKAIAGKKK) is disordered.

The protein belongs to the universal ribosomal protein uS13 family. Part of the 30S ribosomal subunit. Forms a loose heterodimer with protein S19. Forms two bridges to the 50S subunit in the 70S ribosome.

Functionally, located at the top of the head of the 30S subunit, it contacts several helices of the 16S rRNA. In the 70S ribosome it contacts the 23S rRNA (bridge B1a) and protein L5 of the 50S subunit (bridge B1b), connecting the 2 subunits; these bridges are implicated in subunit movement. Contacts the tRNAs in the A and P-sites. The sequence is that of Small ribosomal subunit protein uS13 from Roseobacter denitrificans (strain ATCC 33942 / OCh 114) (Erythrobacter sp. (strain OCh 114)).